We begin with the raw amino-acid sequence, 348 residues long: Protein RecA (348 aa).

Residue 66-73 (GPESSGKT) coordinates ATP.

This sequence belongs to the RecA family.

It is found in the cytoplasm. Its function is as follows. Can catalyze the hydrolysis of ATP in the presence of single-stranded DNA, the ATP-dependent uptake of single-stranded DNA by duplex DNA, and the ATP-dependent hybridization of homologous single-stranded DNAs. It interacts with LexA causing its activation and leading to its autocatalytic cleavage. This Legionella pneumophila (strain Paris) protein is Protein RecA.